The following is a 370-amino-acid chain: Putative agmatine deiminase (370 aa).

Cysteine 361 (amidino-cysteine intermediate) is an active-site residue.

Belongs to the agmatine deiminase family.

It catalyses the reaction agmatine + H2O = N-carbamoylputrescine + NH4(+). The chain is Putative agmatine deiminase from Shewanella putrefaciens (strain CN-32 / ATCC BAA-453).